Here is a 382-residue protein sequence, read N- to C-terminus: Sphingoid long-chain base transporter RSB1 (382 aa).

The Extracellular portion of the chain corresponds to 1–34; sequence MSNATNNTLGSLLPQLEAAANSNSLYGGMVPNLR. N-linked (GlcNAc...) asparagine glycosylation is found at Asn-3 and Asn-6. Residues 35 to 55 form a helical membrane-spanning segment; that stretch reads FNITMIVIWGILLTIHVVQLL. Residues 56–57 lie on the Cytoplasmic side of the membrane; that stretch reads MR. A helical membrane pass occupies residues 58 to 78; sequence QYWFSIAFICTGILEVLGFIG. The Extracellular portion of the chain corresponds to 79–90; that stretch reads RTWSHSNVADMD. The chain crosses the membrane as a helical span at residues 91–111; sequence AFLLNMICLTIAPVFTMGGIY. Residues 112-135 lie on the Cytoplasmic side of the membrane; sequence YQLAKLIEVYGHRFSLLPSPMAYS. A helical membrane pass occupies residues 136-156; sequence FIFICSDIVSLVVQAVGGGLC. The Extracellular portion of the chain corresponds to 157–171; that stretch reads GVAVTDGTSTTTGNH. Residues 172–192 traverse the membrane as a helical segment; sequence VFIAGLAIQVASMAIFLMLWF. Residues 193-241 lie on the Cytoplasmic side of the membrane; the sequence is HFLFRIYISVRWEHINSRPISLSLLKISQTEVDYLYREKFHFLRLEPKR. The chain crosses the membrane as a helical span at residues 242 to 262; that stretch reads WVFHYFNLAITVAVLTIFTRC. The Extracellular portion of the chain corresponds to 263-281; that stretch reads CYRLAELVVGWDGYLITHE. Residues 282 to 302 form a helical membrane-spanning segment; that stretch reads WYFIILDALMMAIATVTLTIF. The Cytoplasmic segment spans residues 303–382; it reads HPGFAFKGRS…LFSSKKKAKL (80 aa).

It belongs to the lipid-translocating exporter (LTE) (TC 9.A.26.1) family.

It localises to the cell membrane. In terms of biological role, catalyzes the ATP-dependent translocation of sphingoid long-chain bases (LCBs) from the cytoplasmic site toward the extracytoplasmic side of the membrane (flip-flop). Involved in the establishment of the functional lipid asymmetry of the plasma membrane. Regulates intracellular levels of LCBs, sphingolipid precursors that are growth inhibitory at increased levels. The chain is Sphingoid long-chain base transporter RSB1 (RSB1) from Saccharomyces cerevisiae (strain ATCC 204508 / S288c) (Baker's yeast).